Reading from the N-terminus, the 324-residue chain is Olfactory receptor 1L3 (324 aa).

Residues 1-25 (MGMSNLTRLSEFILLGLSSRSEDQR) lie on the Extracellular side of the membrane. N-linked (GlcNAc...) asparagine glycosylation is present at N5. The chain crosses the membrane as a helical span at residues 26–49 (PLFALFLIIYLVTLMGNLLIILAI). At 50–57 (HSDPRLQN) the chain is on the cytoplasmic side. The chain crosses the membrane as a helical span at residues 58–79 (PMYFFLSILSFADICYTTVIVP). At 80–100 (KMLVNFLSEKKTISYAECLAQ) the chain is on the extracellular side. C97 and C189 form a disulfide bridge. A helical transmembrane segment spans residues 101–120 (MYFFLVFGNIDSYLLAAMAI). Over 121–139 (NRCVAICNPFHYVTVMNRR) the chain is Cytoplasmic. A helical membrane pass occupies residues 140–158 (CCVLLLAFPITFSYFHSLL). At 159 to 196 (HVLLVNRLTFCTSNVIHHFFCDVNPVLKLSCSSTFVNE) the chain is on the extracellular side. Residues 197–219 (IVAMTEGLASVMAPFVCIIISYL) form a helical membrane-spanning segment. At 220 to 236 (RILIAVLKIPSAAGKHK) the chain is on the cytoplasmic side. Residues 237-259 (AFSTCSSHLTVVILFYGSISYVY) traverse the membrane as a helical segment. Residues 260–271 (LQPLSSYTVKDR) lie on the Extracellular side of the membrane. Residues 272–291 (IATINYTVLTSVLNPFIYSL) form a helical membrane-spanning segment. The Cytoplasmic portion of the chain corresponds to 292–324 (RNKDMKRGLQKLINKIKSQMSRFSTKTNKICGP).

Belongs to the G-protein coupled receptor 1 family.

Its subcellular location is the cell membrane. Odorant receptor. The chain is Olfactory receptor 1L3 (OR1L3) from Homo sapiens (Human).